Here is a 401-residue protein sequence, read N- to C-terminus: Mannan endo-1,4-beta-mannosidase 3 (401 aa).

Positions Met-1 to Ala-24 are cleaved as a signal peptide. Residues Trp-84 and Asn-198 each contribute to the substrate site. The active-site Proton donor is the Glu-199. Residue Tyr-277 participates in substrate binding. Residue Glu-317 is the Nucleophile of the active site. Position 356 (Trp-356) interacts with substrate.

It belongs to the glycosyl hydrolase 5 (cellulase A) family.

The protein localises to the secreted. The enzyme catalyses Random hydrolysis of (1-&gt;4)-beta-D-mannosidic linkages in mannans, galactomannans and glucomannans.. The chain is Mannan endo-1,4-beta-mannosidase 3 (MAN3) from Solanum lycopersicum (Tomato).